The sequence spans 340 residues: Ketol-acid reductoisomerase (NADP(+)) (340 aa).

The region spanning methionine 1 to threonine 182 is the KARI N-terminal Rossmann domain. NADP(+) contacts are provided by residues tyrosine 24–glutamine 27, arginine 48, serine 51, serine 53, and aspartate 83–glutamine 86. Histidine 108 is an active-site residue. Glycine 134 lines the NADP(+) pocket. Residues asparagine 183 to isoleucine 329 enclose the KARI C-terminal knotted domain. Mg(2+) contacts are provided by aspartate 191, glutamate 195, glutamate 227, and glutamate 231. Serine 252 lines the substrate pocket.

The protein belongs to the ketol-acid reductoisomerase family. Mg(2+) serves as cofactor.

It carries out the reaction (2R)-2,3-dihydroxy-3-methylbutanoate + NADP(+) = (2S)-2-acetolactate + NADPH + H(+). It catalyses the reaction (2R,3R)-2,3-dihydroxy-3-methylpentanoate + NADP(+) = (S)-2-ethyl-2-hydroxy-3-oxobutanoate + NADPH + H(+). It participates in amino-acid biosynthesis; L-isoleucine biosynthesis; L-isoleucine from 2-oxobutanoate: step 2/4. It functions in the pathway amino-acid biosynthesis; L-valine biosynthesis; L-valine from pyruvate: step 2/4. Involved in the biosynthesis of branched-chain amino acids (BCAA). Catalyzes an alkyl-migration followed by a ketol-acid reduction of (S)-2-acetolactate (S2AL) to yield (R)-2,3-dihydroxy-isovalerate. In the isomerase reaction, S2AL is rearranged via a Mg-dependent methyl migration to produce 3-hydroxy-3-methyl-2-ketobutyrate (HMKB). In the reductase reaction, this 2-ketoacid undergoes a metal-dependent reduction by NADPH to yield (R)-2,3-dihydroxy-isovalerate. This Cereibacter sphaeroides (strain ATCC 17029 / ATH 2.4.9) (Rhodobacter sphaeroides) protein is Ketol-acid reductoisomerase (NADP(+)).